The sequence spans 1573 residues: Pentafunctional AROM polypeptide 1 (1573 aa).

Residues Met-1–Asn-380 form a 3-dehydroquinate synthase region. NAD(+)-binding positions include Asp-44–Asn-46, Glu-81–Lys-84, Gly-112–Val-114, and Asp-117. A 7-phospho-2-dehydro-3-deoxy-D-arabino-heptonate-binding site is contributed by Arg-128. Thr-137–Thr-138 contributes to the NAD(+) binding site. 7-phospho-2-dehydro-3-deoxy-D-arabino-heptonate contacts are provided by Asp-144 and Lys-150. Position 159 (Lys-159) interacts with NAD(+). Asn-160 contacts 7-phospho-2-dehydro-3-deoxy-D-arabino-heptonate. NAD(+)-binding positions include Phe-177–Thr-180 and Asn-188. Glu-192 provides a ligand contact to Zn(2+). 7-phospho-2-dehydro-3-deoxy-D-arabino-heptonate-binding positions include Glu-192–Lys-195 and Lys-246. The Proton acceptor; for 3-dehydroquinate synthase activity role is filled by Glu-256. Residues Arg-260–Asn-264 and His-267 each bind 7-phospho-2-dehydro-3-deoxy-D-arabino-heptonate. His-267 contributes to the Zn(2+) binding site. His-271 serves as the catalytic Proton acceptor; for 3-dehydroquinate synthase activity. His-283 and Lys-352 together coordinate 7-phospho-2-dehydro-3-deoxy-D-arabino-heptonate. His-283 provides a ligand contact to Zn(2+). Positions Val-393–Val-838 are EPSP synthase. Cys-820 acts as the For EPSP synthase activity in catalysis. The segment at Asp-859–Ser-1051 is shikimate kinase. Gly-866–Thr-873 lines the ATP pocket. The tract at residues Leu-1052 to Glu-1273 is 3-dehydroquinase. His-1175 (proton acceptor; for 3-dehydroquinate dehydratase activity) is an active-site residue. The active-site Schiff-base intermediate with substrate; for 3-dehydroquinate dehydratase activity is Lys-1203. The shikimate dehydrogenase stretch occupies residues Ala-1286–Lys-1573.

The protein in the N-terminal section; belongs to the sugar phosphate cyclases superfamily. Dehydroquinate synthase family. It in the 2nd section; belongs to the EPSP synthase family. This sequence in the 3rd section; belongs to the shikimate kinase family. In the 4th section; belongs to the type-I 3-dehydroquinase family. The protein in the C-terminal section; belongs to the shikimate dehydrogenase family. As to quaternary structure, homodimer. Zn(2+) is required as a cofactor.

Its subcellular location is the cytoplasm. It catalyses the reaction 7-phospho-2-dehydro-3-deoxy-D-arabino-heptonate = 3-dehydroquinate + phosphate. The enzyme catalyses 3-dehydroquinate = 3-dehydroshikimate + H2O. It carries out the reaction shikimate + NADP(+) = 3-dehydroshikimate + NADPH + H(+). The catalysed reaction is shikimate + ATP = 3-phosphoshikimate + ADP + H(+). It catalyses the reaction 3-phosphoshikimate + phosphoenolpyruvate = 5-O-(1-carboxyvinyl)-3-phosphoshikimate + phosphate. Its pathway is metabolic intermediate biosynthesis; chorismate biosynthesis; chorismate from D-erythrose 4-phosphate and phosphoenolpyruvate: step 2/7. The protein operates within metabolic intermediate biosynthesis; chorismate biosynthesis; chorismate from D-erythrose 4-phosphate and phosphoenolpyruvate: step 3/7. It functions in the pathway metabolic intermediate biosynthesis; chorismate biosynthesis; chorismate from D-erythrose 4-phosphate and phosphoenolpyruvate: step 4/7. It participates in metabolic intermediate biosynthesis; chorismate biosynthesis; chorismate from D-erythrose 4-phosphate and phosphoenolpyruvate: step 5/7. Its pathway is metabolic intermediate biosynthesis; chorismate biosynthesis; chorismate from D-erythrose 4-phosphate and phosphoenolpyruvate: step 6/7. The AROM polypeptide catalyzes 5 consecutive enzymatic reactions in prechorismate polyaromatic amino acid biosynthesis. The protein is Pentafunctional AROM polypeptide 1 of Talaromyces marneffei (strain ATCC 18224 / CBS 334.59 / QM 7333) (Penicillium marneffei).